Reading from the N-terminus, the 549-residue chain is Glucose-6-phosphate isomerase (549 aa).

Glu-355 functions as the Proton donor in the catalytic mechanism. Catalysis depends on residues His-386 and Lys-514.

Belongs to the GPI family.

It localises to the cytoplasm. It carries out the reaction alpha-D-glucose 6-phosphate = beta-D-fructose 6-phosphate. It functions in the pathway carbohydrate biosynthesis; gluconeogenesis. The protein operates within carbohydrate degradation; glycolysis; D-glyceraldehyde 3-phosphate and glycerone phosphate from D-glucose: step 2/4. Catalyzes the reversible isomerization of glucose-6-phosphate to fructose-6-phosphate. This Klebsiella pneumoniae (strain 342) protein is Glucose-6-phosphate isomerase.